The following is a 116-amino-acid chain: Photosystem II assembly factor Psb28 protein (116 aa).

The protein belongs to the Psb28 family. Part of a photosystem II (PSII) assembly intermediate complex PSII-I; crystallized from a strain deleted of psbJ, it forms monomeric PSII before addition of the oxygen evolving complex. PSII-I includes 3 assembly factors not found in mature PSII (Psb27, Psb28 and Psb34). This protein binds to the cytoplasmic face of D1 and D2 (psbA and psbD), contacting CP47 (psbB) directly above the quinone b-binding site.

It localises to the cellular thylakoid membrane. A photosystem II (PSII) assembly factor that binds PSII during biogenesis, protecting the complex until water splitting is activated. This is Photosystem II assembly factor Psb28 protein from Thermosynechococcus vestitus (strain NIES-2133 / IAM M-273 / BP-1).